The sequence spans 153 residues: Small ribosomal subunit protein bS16 (153 aa).

Positions Glu-114–Lys-153 are disordered. A compositionally biased stretch (low complexity) spans Ala-137 to Lys-153.

It belongs to the bacterial ribosomal protein bS16 family.

The chain is Small ribosomal subunit protein bS16 from Rhodococcus jostii (strain RHA1).